Reading from the N-terminus, the 193-residue chain is Rho-related GTP-binding protein RhoA-A (193 aa).

Residues 12-19 (GDGACGKT), 30-37 (FPEVYVPT), 59-63 (DTAGQ), 117-120 (NKKD), and 160-162 (SAK) each bind GTP. Y34 carries (Microbial infection) O-linked (GlcNAc) tyrosine; by Yersinia Afp18 glycosylation. Position 190 is a cysteine methyl ester (C190). C190 carries S-geranylgeranyl cysteine lipidation. Positions 191–193 (ALL) are cleaved as a propeptide — removed in mature form.

It belongs to the small GTPase superfamily. Rho family. Post-translationally, (Microbial infection) Glycosylated at Tyr-34 by Yersinia ruckeri toxin Afp18. Mono-O-GlcNAcylation by Afp18 inhibits RhoA activation by guanine nucleotide exchange factors and blocks RhoA signaling.

Its subcellular location is the cell membrane. Its function is as follows. Regulates a signal transduction pathway linking plasma membrane receptors to the assembly of focal adhesions and actin stress fibers. This Danio rerio (Zebrafish) protein is Rho-related GTP-binding protein RhoA-A.